The sequence spans 430 residues: Delta-aminolevulinic acid dehydratase 1, chloroplastic (430 aa).

The transit peptide at 1 to 52 (MATTPIFNASCSFPSTRGIDCKSYIGLRSNVSKVSVASSRIATSQRRNLVVR) directs the protein to the chloroplast. The segment covering 82-91 (EAPPVPPKPA) has biased composition (pro residues). The interval 82-101 (EAPPVPPKPAAPVGTPIIKP) is disordered. Lys298 acts as the Schiff-base intermediate with substrate in catalysis. 5-aminolevulinate-binding residues include Arg308 and Lys320. Glu336 contacts Mg(2+). The active-site Schiff-base intermediate with substrate is the Lys351. 5-aminolevulinate is bound by residues Ser377 and Tyr416.

The protein belongs to the ALAD family. As to quaternary structure, homooctamer. Requires Mg(2+) as cofactor. As to expression, highly expressed in cotyledons during dark-to-light transition.

The protein resides in the plastid. Its subcellular location is the chloroplast. It carries out the reaction 2 5-aminolevulinate = porphobilinogen + 2 H2O + H(+). It functions in the pathway porphyrin-containing compound metabolism; protoporphyrin-IX biosynthesis; coproporphyrinogen-III from 5-aminolevulinate: step 1/4. The protein operates within porphyrin-containing compound metabolism; chlorophyll biosynthesis. Functionally, catalyzes an early step in the biosynthesis of tetrapyrroles. Binds two molecules of 5-aminolevulinate per subunit, each at a distinct site, and catalyzes their condensation to form porphobilinogen. The protein is Delta-aminolevulinic acid dehydratase 1, chloroplastic (HEMB1) of Arabidopsis thaliana (Mouse-ear cress).